A 478-amino-acid chain; its full sequence is Serine hydroxymethyltransferase, cytosolic (478 aa).

Residue lysine 251 is modified to N6-(pyridoxal phosphate)lysine.

This sequence belongs to the SHMT family. In terms of assembly, homotetramer. Identified in complex with FAM175B and the other subunits of the BRISC complex, at least composed of FAM175B/ABRO1, BRCC3/BRCC36, BABAM2 and BABAM1/NBA1. Pyridoxal 5'-phosphate serves as cofactor.

It is found in the cytoplasm. The catalysed reaction is (6R)-5,10-methylene-5,6,7,8-tetrahydrofolate + glycine + H2O = (6S)-5,6,7,8-tetrahydrofolate + L-serine. It participates in one-carbon metabolism; tetrahydrofolate interconversion. Functionally, interconversion of serine and glycine. This Mus musculus (Mouse) protein is Serine hydroxymethyltransferase, cytosolic (Shmt1).